The sequence spans 384 residues: ATP phosphoribosyltransferase regulatory subunit (384 aa).

It belongs to the class-II aminoacyl-tRNA synthetase family. HisZ subfamily. As to quaternary structure, heteromultimer composed of HisG and HisZ subunits.

The protein resides in the cytoplasm. It participates in amino-acid biosynthesis; L-histidine biosynthesis; L-histidine from 5-phospho-alpha-D-ribose 1-diphosphate: step 1/9. Functionally, required for the first step of histidine biosynthesis. May allow the feedback regulation of ATP phosphoribosyltransferase activity by histidine. The chain is ATP phosphoribosyltransferase regulatory subunit from Rhodospirillum rubrum (strain ATCC 11170 / ATH 1.1.1 / DSM 467 / LMG 4362 / NCIMB 8255 / S1).